A 284-amino-acid chain; its full sequence is MESLSELSVQFSQLSMFPFFDMAHYVVSVMSAREQAGALDIAARSPMASWFSAMLYCFGGGILSSILLAEPPIAVLSNTTNIMLASTIWYMVYYFPYDLFYNCFFFLPIRLIIAGMKEVTRTWKILSGVTHAHSHYKDALLVMITIGWARGAGGGLISNFEQLVRGVWKPESNEFLKMSYPVKVTLIGAVLFTLQHGHYLPISRHNLMLIYTMFLVLIKVTMMLTHSTASPFLPLETPLQRILFGQRQKPSEVRQSASSSGAKGKPSKKTLDKDSGEQSKKKDS.

At 1-15 the chain is on the lumenal side; the sequence is MESLSELSVQFSQLS. The helical transmembrane segment at 16-33 threads the bilayer; that stretch reads MFPFFDMAHYVVSVMSAR. Residues 34-46 are Cytoplasmic-facing; the sequence is EQAGALDIAARSP. Residues 47–68 traverse the membrane as a helical segment; sequence MASWFSAMLYCFGGGILSSILL. At 69-79 the chain is on the lumenal side; sequence AEPPIAVLSNT. The chain crosses the membrane as a helical span at residues 80 to 99; sequence TNIMLASTIWYMVYYFPYDL. Residues 100 to 102 are Cytoplasmic-facing; it reads FYN. A helical membrane pass occupies residues 103 to 121; sequence CFFFLPIRLIIAGMKEVTR. A 1,2-diacyl-sn-glycero-3-phospho-(1D-myo-inositol-4,5-bisphosphate)-binding residues include Lys-117 and Arg-121. The Lumenal segment spans residues 122-137; sequence TWKILSGVTHAHSHYK. The helical transmembrane segment at 138 to 155 threads the bilayer; that stretch reads DALLVMITIGWARGAGGG. At 156–177 the chain is on the cytoplasmic side; sequence LISNFEQLVRGVWKPESNEFLK. Residues 178 to 195 form a helical membrane-spanning segment; sequence MSYPVKVTLIGAVLFTLQ. At 196–206 the chain is on the lumenal side; it reads HGHYLPISRHN. A helical transmembrane segment spans residues 207-224; that stretch reads LMLIYTMFLVLIKVTMML. Over 225 to 284 the chain is Cytoplasmic; it reads THSTASPFLPLETPLQRILFGQRQKPSEVRQSASSSGAKGKPSKKTLDKDSGEQSKKKDS. The interval 246–284 is disordered; sequence QRQKPSEVRQSASSSGAKGKPSKKTLDKDSGEQSKKKDS. The segment covering 269-284 has biased composition (basic and acidic residues); the sequence is KTLDKDSGEQSKKKDS.

It belongs to the TMEM38 family. As to quaternary structure, homotrimer; conformation seems to be controled by binding to diacylglycerol (DAG).

Its subcellular location is the endoplasmic reticulum membrane. The catalysed reaction is K(+)(in) = K(+)(out). Channel activity is activated by increased cytosolic Ca(2+) levels and blocked by luminal high Ca(2+) levels. Its function is as follows. Intracellular monovalent cation channel required for maintenance of rapid intracellular calcium release. Acts as a potassium counter-ion channel that functions in synchronization with calcium release from intracellular stores. Activated by increased cytosolic Ca(2+) levels. This Xenopus laevis (African clawed frog) protein is Trimeric intracellular cation channel type B-A (tmem38b-a).